A 294-amino-acid chain; its full sequence is Probable 2-(5''-triphosphoribosyl)-3'-dephosphocoenzyme-A synthase (294 aa).

Belongs to the CitG/MdcB family.

The catalysed reaction is 3'-dephospho-CoA + ATP = 2'-(5''-triphospho-alpha-D-ribosyl)-3'-dephospho-CoA + adenine. In Streptococcus pyogenes serotype M28 (strain MGAS6180), this protein is Probable 2-(5''-triphosphoribosyl)-3'-dephosphocoenzyme-A synthase.